A 233-amino-acid polypeptide reads, in one-letter code: Octanoyltransferase (233 aa).

The 181-residue stretch at 34 to 214 (GQAPSTVLLL…EFSAREATLI (181 aa)) folds into the BPL/LPL catalytic domain. Residues 72-79 (RGGKLTWH), 144-146 (AIG), and 157-159 (GFS) contribute to the substrate site. Cys-175 serves as the catalytic Acyl-thioester intermediate.

Belongs to the LipB family.

It is found in the cytoplasm. The catalysed reaction is octanoyl-[ACP] + L-lysyl-[protein] = N(6)-octanoyl-L-lysyl-[protein] + holo-[ACP] + H(+). It participates in protein modification; protein lipoylation via endogenous pathway; protein N(6)-(lipoyl)lysine from octanoyl-[acyl-carrier-protein]: step 1/2. Its function is as follows. Catalyzes the transfer of endogenously produced octanoic acid from octanoyl-acyl-carrier-protein onto the lipoyl domains of lipoate-dependent enzymes. Lipoyl-ACP can also act as a substrate although octanoyl-ACP is likely to be the physiological substrate. The protein is Octanoyltransferase of Renibacterium salmoninarum (strain ATCC 33209 / DSM 20767 / JCM 11484 / NBRC 15589 / NCIMB 2235).